The following is a 350-amino-acid chain: C5a anaphylatoxin chemotactic receptor 1 (350 aa).

The Extracellular portion of the chain corresponds to 1-37; sequence MDDMCSILTEEELSLYNITDCEFVKPGGLGPVLGPRH. A glycan (N-linked (GlcNAc...) asparagine) is linked at asparagine 17. Residues 38-64 form a helical membrane-spanning segment; the sequence is LSALVFYGLVFLLGVPGNALVVWVTGF. Residues 65-69 are Cytoplasmic-facing; it reads RMPRS. Residues 70–93 traverse the membrane as a helical segment; sequence VTSLWFLNLALADLLCCLSLPLLM. At 94-110 the chain is on the extracellular side; sequence VPLAMDQHWPFGPVACK. Cysteines 109 and 187 form a disulfide. Residues 111 to 132 form a helical membrane-spanning segment; the sequence is LLKGLLYLIMFCSVLLLVLISL. Topologically, residues 133 to 154 are cytoplasmic; sequence DRFLLVSWPVWCQNWRRPRKAG. The helical transmembrane segment at 155–174 threads the bilayer; it reads WVCVGVWLLALLGSIPQFVY. Residues 175–197 are Extracellular-facing; that stretch reads VKEVQLSTSKSECLGLYTVASAW. A helical transmembrane segment spans residues 198–223; it reads ANTTARFLVGFVLPFITIVTCHWVVY. The Cytoplasmic portion of the chain corresponds to 224–247; that stretch reads SRARRGSGVGPGRVSEARSRRTLR. A helical transmembrane segment spans residues 248-270; sequence VIVAVSLSFFLCWFPLHILDFLV. Residues 271–287 lie on the Extracellular side of the membrane; it reads LSTPRHSSHSANIQLAH. Residues 288-308 form a helical membrane-spanning segment; sequence TLALCLAYCNSCLNPLLYVCL. The Cytoplasmic segment spans residues 309–350; that stretch reads GRGFKQNINRSLRNMFNFATEESVTRQSMFKSTSERTQEMNM.

Belongs to the G-protein coupled receptor 1 family. In terms of tissue distribution, high expression in head, kidney and posterior kidney, lower levels in peripheral blood leukocytes and spleen, low expression in brain and gills, heart, intestine and very low expression in liver and muscle.

It localises to the cell membrane. Functionally, receptor for the chemotactic and inflammatory peptide anaphylatoxin C5a. This receptor stimulates chemotaxis, granule enzyme release and superoxide anion production. This chain is C5a anaphylatoxin chemotactic receptor 1 (c5ar1), found in Oncorhynchus mykiss (Rainbow trout).